We begin with the raw amino-acid sequence, 104 residues long: Replication restart protein PriB (104 aa).

Residues 1-101 (MTNRLALSGT…LHAEQIELID (101 aa)) enclose the SSB domain.

This sequence belongs to the PriB family. In terms of assembly, homodimer. Interacts with PriA and DnaT. Component of the replication restart primosome. Primosome assembly occurs via a 'hand-off' mechanism. PriA binds to replication forks, subsequently PriB then DnaT bind; DnaT then displaces ssDNA to generate the helicase loading substrate.

Its function is as follows. Involved in the restart of stalled replication forks, which reloads the replicative helicase on sites other than the origin of replication; the PriA-PriB pathway is the major replication restart pathway. During primosome assembly it facilitates complex formation between PriA and DnaT on DNA; stabilizes PriA on DNA. Stimulates the DNA unwinding activity of PriA helicase. The protein is Replication restart protein PriB of Salmonella agona (strain SL483).